Reading from the N-terminus, the 593-residue chain is Melanopsin-A (593 aa).

The Extracellular segment spans residues 1-77 (MMSGAAHSVR…VDVPDHAHYT (77 aa)). Residues 78–98 (IGAVILTVGITGMLGNFLVIY) form a helical membrane-spanning segment. The Cytoplasmic segment spans residues 99 to 112 (AFSRSRTLRTPANL). The helical transmembrane segment at 113 to 133 (FIINLAITDFLMCATQAPIFF) threads the bilayer. Topologically, residues 134-150 (TTSMHKRWIFGEKGCEL) are extracellular. Cys148 and Cys226 are joined by a disulfide. A helical transmembrane segment spans residues 151–171 (YAFCGALFGICSMITLMVIAV). Residues 172–191 (DRYFVITRPLASIGVLSQKR) lie on the Cytoplasmic side of the membrane. A helical membrane pass occupies residues 192 to 212 (ALLILLVAWVYSLGWSLPPFF). Residues 213–243 (GWSAYVPEGLLTSCTWDYMTFTPSVRAYTML) lie on the Extracellular side of the membrane. A helical membrane pass occupies residues 244 to 264 (LFIFVFFIPLIVIIYCYFFIF). Residues 265–300 (RSIRTTNEAVGKINGDNKRDSMKRFQRLKNEWKMAK) are Cytoplasmic-facing. A helical transmembrane segment spans residues 301–321 (IALIVILMYVISWSPYSTVAL). Residues 322 to 336 (TAFAGYSDFLTPYMN) are Extracellular-facing. Residues 337 to 357 (SVPAVIAKASAIHNPIIYAIT) form a helical membrane-spanning segment. Lys344 is modified (N6-(retinylidene)lysine). At 358–593 (HPKYRLAIAK…HIDNHRPQYL (236 aa)) the chain is on the cytoplasmic side. 2 disordered regions span residues 397-449 (TVTS…RQVS) and 547-593 (RSNV…PQYL). Positions 414–449 (TGKSRLSSASDSESGWTDTEADLSSMSSRPASRQVS) are enriched in polar residues. Over residues 581-593 (ESGHIDNHRPQYL) the composition is skewed to basic and acidic residues.

It belongs to the G-protein coupled receptor 1 family. Opsin subfamily.

It localises to the cell membrane. In terms of biological role, photoreceptor implicated in non-image-forming responses to light. May be able to isomerize covalently bound all-trans retinal back to 11-cis retinal. This is Melanopsin-A (opn4a) from Danio rerio (Zebrafish).